Reading from the N-terminus, the 61-residue chain is Protein translocase subunit SecE (61 aa).

The chain crosses the membrane as a helical span at residues 39 to 59; it reads VGIIIIGLIGFILSIVSQVLF.

This sequence belongs to the SecE/SEC61-gamma family. In terms of assembly, component of the Sec protein translocase complex. Heterotrimer consisting of SecY (alpha), SecG (beta) and SecE (gamma) subunits. The heterotrimers can form oligomers, although 1 heterotrimer is thought to be able to translocate proteins. Interacts with the ribosome. May interact with SecDF, and other proteins may be involved.

The protein localises to the cell membrane. Its function is as follows. Essential subunit of the Sec protein translocation channel SecYEG. Clamps together the 2 halves of SecY. May contact the channel plug during translocation. The polypeptide is Protein translocase subunit SecE (Methanosphaera stadtmanae (strain ATCC 43021 / DSM 3091 / JCM 11832 / MCB-3)).